Consider the following 216-residue polypeptide: MQKFTVHKGLVAPMDRENVDTDAIIPKQFLKSIRKTGFGPNLFDAWRYLDAGFPGQDPASRKPNPDFVLNQPRYAGASILLARKNFGCGSSREHAPWALDQYGFRAIIAPSYADIFFNNSFKNGLLPIVLPEAQIAQLFDEVNAFPGYTLTIDLERQVIVKPQGKELPFEVQAFRKYCLLNGFDDIGLTLRQSDKIKAFEAERLAKKPWLNHTIPG.

It belongs to the LeuD family. LeuD type 1 subfamily. Heterodimer of LeuC and LeuD.

The enzyme catalyses (2R,3S)-3-isopropylmalate = (2S)-2-isopropylmalate. Its pathway is amino-acid biosynthesis; L-leucine biosynthesis; L-leucine from 3-methyl-2-oxobutanoate: step 2/4. In terms of biological role, catalyzes the isomerization between 2-isopropylmalate and 3-isopropylmalate, via the formation of 2-isopropylmaleate. This chain is 3-isopropylmalate dehydratase small subunit, found in Polaromonas sp. (strain JS666 / ATCC BAA-500).